The primary structure comprises 70 residues: Large ribosomal subunit protein bL31 (70 aa).

Residues C16, C18, C37, and C40 each contribute to the Zn(2+) site.

The protein belongs to the bacterial ribosomal protein bL31 family. Type A subfamily. In terms of assembly, part of the 50S ribosomal subunit. Zn(2+) is required as a cofactor.

In terms of biological role, binds the 23S rRNA. This is Large ribosomal subunit protein bL31 from Shewanella denitrificans (strain OS217 / ATCC BAA-1090 / DSM 15013).